The chain runs to 245 residues: MQWQDHGMIVSMTPYGDTRSILSVFTRNHGICNAMIRLNKKKQSLQIGDRVCVTWRARLANNLGYFNSCEIISSAFYAYFQDHSKLLCLSSVTSTIYKSVPTNDAHPILYDYLIEFAEAAECGGHWYNEYLKLELEILSQLGFALDLSRCAVYHCEDNLLYISPKTGRAISERAGVSYRHLLFPLPQILRDLHNGTHTEQCSRKEFLLCLQILGYFLHRHLLSDDSKFLEQRKEMTALIYEEEAF.

Belongs to the RecO family.

Involved in DNA repair and RecF pathway recombination. The sequence is that of DNA repair protein RecO from Anaplasma phagocytophilum (strain HZ).